The chain runs to 247 residues: Triosephosphate isomerase (247 aa).

Substrate-binding residues include N10 and K12. Residue H94 is the Electrophile of the active site. E164 serves as the catalytic Proton acceptor.

The protein belongs to the triosephosphate isomerase family. As to quaternary structure, homodimer.

The enzyme catalyses D-glyceraldehyde 3-phosphate = dihydroxyacetone phosphate. Its pathway is carbohydrate biosynthesis; gluconeogenesis. The protein operates within carbohydrate degradation; glycolysis; D-glyceraldehyde 3-phosphate from glycerone phosphate: step 1/1. In Culex tarsalis (Encephalitis mosquito), this protein is Triosephosphate isomerase (Tpi).